We begin with the raw amino-acid sequence, 849 residues long: Aminopeptidase N (849 aa).

Substrate-binding positions include Glu-122 and Gly-259–Asn-263. His-294 provides a ligand contact to Zn(2+). Catalysis depends on Glu-295, which acts as the Proton acceptor. Positions 298 and 317 each coordinate Zn(2+).

It belongs to the peptidase M1 family. Monomer. It depends on Zn(2+) as a cofactor.

It localises to the cytoplasm. The catalysed reaction is Release of an N-terminal amino acid, Xaa-|-Yaa- from a peptide, amide or arylamide. Xaa is preferably Ala, but may be most amino acids including Pro (slow action). When a terminal hydrophobic residue is followed by a prolyl residue, the two may be released as an intact Xaa-Pro dipeptide.. Functionally, aminopeptidase with broad substrate specificity to several peptides. It has more affinity for oligopeptides than for dipeptides. It plays an essential role in the metabolism, it may be involved in nitrogen supply or protein turnover. The protein is Aminopeptidase N (pepN) of Lactococcus lactis subsp. lactis (Streptococcus lactis).